The primary structure comprises 540 residues: Upstream-binding protein 1 (540 aa).

Phosphoserine is present on S22. In terms of domain architecture, Grh/CP2 DB spans 60-296; sequence EHPPFQYVMC…EQKKSSKRTL (237 aa). Disordered regions lie at residues 236-270 and 285-368; these read KPKGADRKQKTDREKMEKRTAHEKEKYQPSYDTTI and EHEQ…QPSA. Positions 238–262 are enriched in basic and acidic residues; that stretch reads KGADRKQKTDREKMEKRTAHEKEKY. A compositionally biased stretch (polar residues) spans 320 to 368; the sequence is YVNNSPSPAPTFTSPQQSTCSVPDSNSSSPNHQGDGASQTSGEQIQPSA. S390 and S393 each carry phosphoserine.

The protein belongs to the grh/CP2 family. CP2 subfamily. In terms of assembly, interacts with TFCP2. Interacts with PIAS1, and is probably part of a complex containing TFCP2, UBP1 and PIAS1. In terms of tissue distribution, expressed in adrenal tissue, JEG-3, NCI-H295A, Hep-G2 and HeLa cell lines.

The protein localises to the nucleus. In terms of biological role, functions as a transcriptional activator in a promoter context-dependent manner. Modulates the placental expression of CYP11A1. Involved in regulation of the alpha-globin gene in erythroid cells. Activation of the alpha-globin promoter in erythroid cells is via synergistic interaction with TFCP2. Involved in regulation of the alpha-globin gene in erythroid cells. Binds strongly to sequences around the HIV-1 initiation site and weakly over the TATA-box. Represses HIV-1 transcription by inhibiting the binding of TFIID to the TATA-box. This Homo sapiens (Human) protein is Upstream-binding protein 1 (UBP1).